An 85-amino-acid chain; its full sequence is Beta-insect depressant toxin Lqh-dprIT3c (85 aa).

The first 21 residues, 1–21, serve as a signal peptide directing secretion; the sequence is MKLLLLLTISASMLIEGLVNA. The LCN-type CS-alpha/beta domain occupies 22–82; it reads DGYIRGGDGC…EWDYETNTCG (61 aa). Disulfide bonds link Cys-31/Cys-81, Cys-35/Cys-56, Cys-42/Cys-63, and Cys-46/Cys-65. Glycine amide is present on Gly-82.

This sequence belongs to the long (4 C-C) scorpion toxin superfamily. Sodium channel inhibitor family. Beta subfamily. Expressed by the venom gland.

The protein localises to the secreted. In terms of biological role, depressant insect beta-toxins cause a transient contraction paralysis followed by a slow flaccid paralysis. They bind voltage-independently at site-4 of sodium channels (Nav) and block action potentials, primarily by depolarizing the axonal membrane and suppressing the sodium current. This depressant toxin is active only on insects. It is found in a relatively small amount in the venom, and its activity on insects is 10-fold higher compared to other known depressant toxins. The chain is Beta-insect depressant toxin Lqh-dprIT3c from Leiurus hebraeus (Hebrew deathstalker scorpion).